The sequence spans 302 residues: MKRDVLSITDLSREEIYELLESAADLKKKRKAGEPTEYLKHKSLGMIFEKSSTRTRVSFEVAMSDFGGHALYLNSRDIQVGRGETIEDTARTLSGYLHGIMARVMSHDTVEKLARFSTIPVINALSDREHPCQILGDFMTIMEYKNRFEGLKFAWIGDGNNVCNSALLGSAIMGMEFVIACPEGYEPGAEFLEKAKALGGKFSITDDPKTAAKDADIIYTDVWVSMGDEAEQEKRLKDFGSFQVNTELLGVAKPDVIVMHCLPARRGLEITDEVMDGPNSVIFEEAENRLHAQKALILKLMR.

Residues 52–55 (STRT), Q79, R103, and 130–133 (HPCQ) each bind carbamoyl phosphate. Residues N161, D221, and 225–226 (SM) each bind L-ornithine. Residues 261–262 (CL) and R289 contribute to the carbamoyl phosphate site.

It belongs to the aspartate/ornithine carbamoyltransferase superfamily. OTCase family.

It localises to the cytoplasm. The catalysed reaction is carbamoyl phosphate + L-ornithine = L-citrulline + phosphate + H(+). The protein operates within amino-acid biosynthesis; L-arginine biosynthesis; L-arginine from L-ornithine and carbamoyl phosphate: step 1/3. Reversibly catalyzes the transfer of the carbamoyl group from carbamoyl phosphate (CP) to the N(epsilon) atom of ornithine (ORN) to produce L-citrulline. This Methanosarcina mazei (strain ATCC BAA-159 / DSM 3647 / Goe1 / Go1 / JCM 11833 / OCM 88) (Methanosarcina frisia) protein is Ornithine carbamoyltransferase.